The chain runs to 176 residues: Ribosome maturation factor RimM (176 aa).

The PRC barrel domain occupies 97–176 (DSEFYHRDLI…QILVDWDPDF (80 aa)).

This sequence belongs to the RimM family. As to quaternary structure, binds ribosomal protein uS19.

It localises to the cytoplasm. An accessory protein needed during the final step in the assembly of 30S ribosomal subunit, possibly for assembly of the head region. Essential for efficient processing of 16S rRNA. May be needed both before and after RbfA during the maturation of 16S rRNA. It has affinity for free ribosomal 30S subunits but not for 70S ribosomes. This Shewanella frigidimarina (strain NCIMB 400) protein is Ribosome maturation factor RimM.